Consider the following 100-residue polypeptide: Replication restart protein PriB (100 aa).

The SSB domain maps to 1–100; sequence MTNRMELSGT…VLHADNITQI (100 aa).

It belongs to the PriB family. As to quaternary structure, homodimer. Interacts with PriA and DnaT. Component of the replication restart primosome. Primosome assembly occurs via a 'hand-off' mechanism. PriA binds to replication forks, subsequently PriB then DnaT bind; DnaT then displaces ssDNA to generate the helicase loading substrate.

Involved in the restart of stalled replication forks, which reloads the replicative helicase on sites other than the origin of replication; the PriA-PriB pathway is the major replication restart pathway. During primosome assembly it facilitates complex formation between PriA and DnaT on DNA; stabilizes PriA on DNA. Stimulates the DNA unwinding activity of PriA helicase. The chain is Replication restart protein PriB from Vibrio parahaemolyticus serotype O3:K6 (strain RIMD 2210633).